A 1097-amino-acid chain; its full sequence is Apolipoprotein B receptor (1097 aa).

Disordered regions lie at residues 64–249 (QEDL…KGEE), 262–376 (AWGT…WTTS), 410–739 (EEEG…SRRG), 789–866 (GWDS…ARAE), and 889–1097 (VGWQ…PKPQ). Basic and acidic residues-rich tracts occupy residues 83–92 (GPGDDRRHEV), 158–177 (ERQE…RSWE), and 185–208 (VRAR…ETEG). The span at 209 to 218 (KAGAVGPKAA) shows a compositional bias: low complexity. Basic and acidic residues-rich tracts occupy residues 219–232 (GDNR…READ) and 279–302 (GREE…EEAR). The span at 312 to 330 (TASGGEEAETASGGEEAGT) shows a compositional bias: low complexity. A compositionally biased stretch (gly residues) spans 331–362 (ASGGEEAGIASGGEAGTASGGEEAGTASGGEE). Ser-458 bears the Phosphoserine mark. Composition is skewed to basic and acidic residues over residues 463-487 (VDLR…RMEE) and 496-505 (EERGSSRDPV). Ser-510 carries the post-translational modification Phosphoserine. Thr-572 carries the phosphothreonine modification. Residue Ser-594 is modified to Phosphoserine. 2 stretches are compositionally biased toward basic and acidic residues: residues 594 to 606 (SKEE…EAGP) and 626 to 637 (NRTRKDMERGNT). The segment covering 640 to 652 (DAADGEQREEEET) has biased composition (acidic residues). 3 stretches are compositionally biased toward basic and acidic residues: residues 791-800 (DSKEKEEAAA), 892-918 (QERE…RLLD), and 928-950 (RRAE…EEQP). The span at 1000–1017 (SRVHLSRSSSQRRSRPSF) shows a compositional bias: basic residues. A compositionally biased stretch (low complexity) spans 1041–1050 (APEQRPLQLE).

As to quaternary structure, homodimer. Post-translationally, there are 2 forms in macrophages, the membrane-binding proteins 200 kDa (MBP 200) and 235 kDa (MBP 235), that can be reduced into a single active ligand-binding species with intermediate mobility (MBP 200R). In terms of tissue distribution, expressed in peripheral blood leukocytes &gt; bone marrow = spleen &gt; lymph node, and only faintly visible in appendix and thymus. Expressed in the brain, heart, kidney, liver, lung, pancreas, and placenta. Expressed primarily by reticuloendothelial cells: monocytes, macrophages, and endothelial cells. Expressed in atherosclerotic lesion foam cells.

The protein localises to the cell membrane. Functionally, macrophage receptor that binds to the apolipoprotein B48 (APOB) of dietary triglyceride (TG)-rich lipoproteins (TRL) or to a like domain of APOB in hypertriglyceridemic very low density lipoprotein (HTG-VLDL). Binds and internalizes TRL when out of the context of the macrophage. May provide essential lipids to reticuloendothelial cells. Could also be involved in foam cell formation with elevated TRL and remnant lipoprotein (RLP). Mediates the rapid high-affinity uptake of chylomicrons (CM), HTG-VLDL, and trypsinized (tryp) VLDL devoid of APOE in vitro in macrophages. This chain is Apolipoprotein B receptor, found in Homo sapiens (Human).